Here is a 266-residue protein sequence, read N- to C-terminus: Glucosamine-6-phosphate deaminase (266 aa).

The active-site Proton acceptor; for enolization step is the aspartate 72. The For ring-opening step role is filled by aspartate 141. The active-site Proton acceptor; for ring-opening step is the histidine 143. The active-site For ring-opening step is glutamate 148.

Belongs to the glucosamine/galactosamine-6-phosphate isomerase family. NagB subfamily. Homohexamer.

It catalyses the reaction alpha-D-glucosamine 6-phosphate + H2O = beta-D-fructose 6-phosphate + NH4(+). The protein operates within amino-sugar metabolism; N-acetylneuraminate degradation; D-fructose 6-phosphate from N-acetylneuraminate: step 5/5. Its activity is regulated as follows. Allosterically activated by N-acetylglucosamine 6-phosphate (GlcNAc6P). Catalyzes the reversible isomerization-deamination of glucosamine 6-phosphate (GlcN6P) to form fructose 6-phosphate (Fru6P) and ammonium ion. The sequence is that of Glucosamine-6-phosphate deaminase from Salmonella typhi.